The sequence spans 156 residues: Ribosomal RNA large subunit methyltransferase H (156 aa).

S-adenosyl-L-methionine-binding positions include Leu73, Gly104, and 123-128 (ISSMTL).

It belongs to the RNA methyltransferase RlmH family. Homodimer.

Its subcellular location is the cytoplasm. The catalysed reaction is pseudouridine(1915) in 23S rRNA + S-adenosyl-L-methionine = N(3)-methylpseudouridine(1915) in 23S rRNA + S-adenosyl-L-homocysteine + H(+). Its function is as follows. Specifically methylates the pseudouridine at position 1915 (m3Psi1915) in 23S rRNA. This chain is Ribosomal RNA large subunit methyltransferase H, found in Burkholderia cenocepacia (strain ATCC BAA-245 / DSM 16553 / LMG 16656 / NCTC 13227 / J2315 / CF5610) (Burkholderia cepacia (strain J2315)).